A 729-amino-acid polypeptide reads, in one-letter code: Fatty acid oxidation complex subunit alpha (729 aa).

The segment at 1–189 (MLYKGDTLYL…KIGLVDGVVA (189 aa)) is enoyl-CoA hydratase/isomerase. Asp-296 contacts substrate. A 3-hydroxyacyl-CoA dehydrogenase region spans residues 311-729 (ETPKHAAVLG…ARPVGALKTA (419 aa)). NAD(+) is bound by residues Met-324, Asp-343, 400–402 (VVE), Lys-407, and Ser-429. Catalysis depends on His-450, which acts as the For 3-hydroxyacyl-CoA dehydrogenase activity. Asn-453 serves as a coordination point for NAD(+). Residues Asn-500 and Tyr-660 each coordinate substrate.

It in the N-terminal section; belongs to the enoyl-CoA hydratase/isomerase family. This sequence in the C-terminal section; belongs to the 3-hydroxyacyl-CoA dehydrogenase family. As to quaternary structure, heterotetramer of two alpha chains (FadB) and two beta chains (FadA).

The catalysed reaction is a (3S)-3-hydroxyacyl-CoA + NAD(+) = a 3-oxoacyl-CoA + NADH + H(+). It carries out the reaction a (3S)-3-hydroxyacyl-CoA = a (2E)-enoyl-CoA + H2O. The enzyme catalyses a 4-saturated-(3S)-3-hydroxyacyl-CoA = a (3E)-enoyl-CoA + H2O. It catalyses the reaction (3S)-3-hydroxybutanoyl-CoA = (3R)-3-hydroxybutanoyl-CoA. The catalysed reaction is a (3Z)-enoyl-CoA = a 4-saturated (2E)-enoyl-CoA. It carries out the reaction a (3E)-enoyl-CoA = a 4-saturated (2E)-enoyl-CoA. It participates in lipid metabolism; fatty acid beta-oxidation. Its function is as follows. Involved in the aerobic and anaerobic degradation of long-chain fatty acids via beta-oxidation cycle. Catalyzes the formation of 3-oxoacyl-CoA from enoyl-CoA via L-3-hydroxyacyl-CoA. It can also use D-3-hydroxyacyl-CoA and cis-3-enoyl-CoA as substrate. This Klebsiella pneumoniae (strain 342) protein is Fatty acid oxidation complex subunit alpha.